Reading from the N-terminus, the 288-residue chain is tRNA pseudouridine synthase A (288 aa).

The active-site Nucleophile is the Asp59. Tyr134 is a substrate binding site.

This sequence belongs to the tRNA pseudouridine synthase TruA family. Homodimer.

It catalyses the reaction uridine(38/39/40) in tRNA = pseudouridine(38/39/40) in tRNA. Formation of pseudouridine at positions 38, 39 and 40 in the anticodon stem and loop of transfer RNAs. This chain is tRNA pseudouridine synthase A, found in Leifsonia xyli subsp. xyli (strain CTCB07).